The primary structure comprises 435 residues: Tungsten-containing formylmethanofuran dehydrogenase 2 subunit B (435 aa).

Residue selenocysteine 121 is a non-standard amino acid, selenocysteine.

This sequence belongs to the FwdB family. This enzyme is composed of six subunits FwdA, FwdC, FwdD, FwdE, FwdF and FwdG. It depends on W-bis(molybdopterin guanine dinucleotide) as a cofactor.

The enzyme catalyses N-formylmethanofuran + 2 oxidized [2Fe-2S]-[ferredoxin] + H2O = methanofuran + 2 reduced [2Fe-2S]-[ferredoxin] + CO2 + H(+). It participates in one-carbon metabolism; methanogenesis from CO(2); 5,10-methenyl-5,6,7,8-tetrahydromethanopterin from CO(2): step 1/3. Catalyzes the reversible oxidation of CO(2) and methanofuran (MFR) to N-formylmethanofuran (CHO-MFR). This enzyme is oxygen-labile. The polypeptide is Tungsten-containing formylmethanofuran dehydrogenase 2 subunit B (fwdB) (Methanocaldococcus jannaschii (strain ATCC 43067 / DSM 2661 / JAL-1 / JCM 10045 / NBRC 100440) (Methanococcus jannaschii)).